A 284-amino-acid chain; its full sequence is 2-dehydro-3-deoxyphosphooctonate aldolase (284 aa).

The protein belongs to the KdsA family.

The protein resides in the cytoplasm. The catalysed reaction is D-arabinose 5-phosphate + phosphoenolpyruvate + H2O = 3-deoxy-alpha-D-manno-2-octulosonate-8-phosphate + phosphate. Its pathway is carbohydrate biosynthesis; 3-deoxy-D-manno-octulosonate biosynthesis; 3-deoxy-D-manno-octulosonate from D-ribulose 5-phosphate: step 2/3. The protein operates within bacterial outer membrane biogenesis; lipopolysaccharide biosynthesis. This Synechococcus sp. (strain ATCC 27144 / PCC 6301 / SAUG 1402/1) (Anacystis nidulans) protein is 2-dehydro-3-deoxyphosphooctonate aldolase.